A 534-amino-acid polypeptide reads, in one-letter code: Calcium-dependent protein kinase 29 (534 aa).

Residues 1–72 are disordered; sequence MGFCFSKFGK…STSSGSQIGP (72 aa). Gly2 carries N-myristoyl glycine lipidation. Residues 16-27 are compositionally biased toward low complexity; it reads IPISSSSDSSPP. Residues 49 to 63 are compositionally biased toward pro residues; the sequence is NPQPKPKPAPPPPPS. One can recognise a Protein kinase domain in the interval 85-343; that stretch reads YDLHKELGRG…AAEALEHPWM (259 aa). Residues 91–99 and Lys114 contribute to the ATP site; that span reads LGRGQFGIT. Catalysis depends on Asp209, which acts as the Proton acceptor. Phosphoserine is present on Ser249. Residues 348–378 form an autoinhibitory domain region; the sequence is ISDKPINSAVLVRMKQFRAMNKLKKLALKVI. 4 consecutive EF-hand domains span residues 385–420, 421–456, 457–492, and 493–527; these read EEIK…LGSK, LTES…RHRL, EKEE…YGMG, and DDAT…GTTD. Residues Asp398, Asp400, Ser402, Thr404, Glu409, Asp434, Asp436, Ser438, Thr440, Glu445, Asp470, Asp472, Ser474, Glu481, Asp505, Asp507, Asp509, Arg511, and Glu516 each contribute to the Ca(2+) site.

This sequence belongs to the protein kinase superfamily. Ser/Thr protein kinase family. CDPK subfamily.

It localises to the membrane. It catalyses the reaction L-seryl-[protein] + ATP = O-phospho-L-seryl-[protein] + ADP + H(+). It carries out the reaction L-threonyl-[protein] + ATP = O-phospho-L-threonyl-[protein] + ADP + H(+). Activated by calcium. Autophosphorylation may play an important role in the regulation of the kinase activity. Its function is as follows. May play a role in signal transduction pathways that involve calcium as a second messenger. The sequence is that of Calcium-dependent protein kinase 29 (CPK29) from Arabidopsis thaliana (Mouse-ear cress).